The chain runs to 1021 residues: Sodium/potassium-transporting ATPase subunit alpha-1 (1021 aa).

Positions 1–5 (MGKGV) are excised as a propeptide. Over residues 1–11 (MGKGVGRDKYE) the composition is skewed to basic and acidic residues. A disordered region spans residues 1 to 37 (MGKGVGRDKYEPAAVSEHGDKKKAKKERDMDELKKEV). Residues 6–85 (GRDKYEPAAV…NALTPPPTTP (80 aa)) lie on the Cytoplasmic side of the membrane. K9 is subject to N6-acetyllysine. Y10 bears the Phosphotyrosine mark. The residue at position 16 (S16) is a Phosphoserine; by PKC. Position 21 is an N6-acetyllysine (K21). The segment covering 26–37 (KERDMDELKKEV) has biased composition (basic and acidic residues). A phosphoserine mark is found at S38 and S45. Residues 80–82 (PPP) are phosphoinositide-3 kinase binding. Residues 86–106 (EWVKFCRQLFGGFSMLLWIGA) form a helical membrane-spanning segment. The Extracellular portion of the chain corresponds to 107–129 (ILCFLAYGIQAATEEEPQNDNLY). Residues 130–150 (LGVVLSAVVIITGCFSYYQEA) traverse the membrane as a helical segment. Residues 151–286 (KSSKIMESFK…GGQTPIAAEI (136 aa)) are Cytoplasmic-facing. Residues 214-233 (SSLTGESEPQTRSPDFTNEN) are disordered. S226 is subject to Phosphoserine. Phosphotyrosine is present on Y258. A helical membrane pass occupies residues 287–306 (EHFIHIITGVAVFLGVSFFI). The Extracellular segment spans residues 307–318 (LSLILEYTWLEA). Residues 319–336 (VIFLIGIIVANVPEGLLA) traverse the membrane as a helical segment. The Cytoplasmic portion of the chain corresponds to 337 to 770 (TVTVCLTLTA…EEGRLIFDNL (434 aa)). D374 functions as the 4-aspartylphosphate intermediate in the catalytic mechanism. A phosphoserine mark is found at S450 and S482. K485 is an ATP binding site. At Y540 the chain carries Phosphotyrosine. Residues 594–715 (RAAVPDAVGK…QGAIVAVTGD (122 aa)) are mediates interaction with SCN7A. Residue K659 is modified to N6-succinyllysine. Phosphoserine is present on residues S666 and S673. Residues D715 and D719 each contribute to the Mg(2+) site. A helical membrane pass occupies residues 771–790 (KKSIAYTLTSNIPEITPFLI). At 791–800 (FIIANIPLPL) the chain is on the extracellular side. A helical membrane pass occupies residues 801 to 821 (GTVTILCIDLGTDMVPAISLA). At 822–841 (YEQAESDIMKRQPRNPKTDK) the chain is on the cytoplasmic side. The helical transmembrane segment at 842–864 (LVNEQLISMAYGQIGMIQALGGF) threads the bilayer. Residues 865-916 (FTYFVILAENGFLPIHLLGLRVNWDDRWINDVEDSYGQQWTYEQRKIVEFTC) are Extracellular-facing. A helical transmembrane segment spans residues 917-936 (HTPFFVTIVVVQWADLVICK). The Cytoplasmic portion of the chain corresponds to 937–949 (TRRNSVFQQGMKN). S941 carries the post-translational modification Phosphoserine; by PKA. The helical transmembrane segment at 950–968 (KILIFGLFEETALAAFLSY) threads the bilayer. Topologically, residues 969–983 (CPGMGVALRMYPLKP) are extracellular. Residues 984–1004 (TWWFCAFPYSLLIFVYDEVRK) traverse the membrane as a helical segment. The Cytoplasmic portion of the chain corresponds to 1005–1021 (LIIRRRPGGWVEKETYY).

The protein belongs to the cation transport ATPase (P-type) (TC 3.A.3) family. Type IIC subfamily. In terms of assembly, the sodium/potassium-transporting ATPase is composed of a catalytic alpha subunit, an auxiliary non-catalytic beta subunit and an additional regulatory subunit. Interacts with regulatory subunit FXYD1. Interacts with regulatory subunit FXYD3. Interacts with SIK1. Interacts with SLC35G1 and STIM1. Interacts with CLN3; this interaction regulates the sodium/potassium-transporting ATPase complex localization at the plasma membrane. Interacts with SCN7A; activates ATP1A1 P-type sodium:potassium-exchanging transporter activity which indirectly signals to nearby neurons to regulate sodium homeostasis. Post-translationally, phosphorylation on Tyr-10 modulates pumping activity. Phosphorylation of Ser-941 by PKA modulates the response of ATP1A1 to PKC. Dephosphorylation by protein phosphatase 2A (PP2A) following increases in intracellular sodium, leading to increase catalytic activity.

The protein localises to the cell membrane. The protein resides in the basolateral cell membrane. It localises to the sarcolemma. Its subcellular location is the cell projection. It is found in the axon. The protein localises to the melanosome. The enzyme catalyses K(+)(out) + Na(+)(in) + ATP + H2O = K(+)(in) + Na(+)(out) + ADP + phosphate + H(+). Its function is as follows. This is the catalytic component of the active enzyme, which catalyzes the hydrolysis of ATP coupled with the exchange of sodium and potassium ions across the plasma membrane. This action creates the electrochemical gradient of sodium and potassium ions, providing the energy for active transport of various nutrients. Could also be part of an osmosensory signaling pathway that senses body-fluid sodium levels and controls salt intake behavior as well as voluntary water intake to regulate sodium homeostasis. In Sus scrofa (Pig), this protein is Sodium/potassium-transporting ATPase subunit alpha-1 (ATP1A1).